A 268-amino-acid polypeptide reads, in one-letter code: Cytochrome b-c1 complex subunit Rieske-5, mitochondrial (268 aa).

The N-terminal 56 residues, 1 to 56 (MLRIAGRKLSSSAAARSSSAFFTRNPFTFTDDSSSPTRSPSPTSLASQFLDQFRGF), are a transit peptide targeting the mitochondrion. Residues 57–105 (SSNSVSPAHQTGLVSDLPATVAAIKNPSSKIVYDDSNHERYPPGDPSKR) are Mitochondrial matrix-facing. Residues 106-128 (AFAYFVLTGGRFVYASLVRLLIL) traverse the membrane as a helical segment. The Mitochondrial intermembrane segment spans residues 129 to 268 (KFVLSMSASK…FMEENKLLIG (140 aa)). Residues 178 to 266 (INLANSVDLG…YSFMEENKLL (89 aa)) form the Rieske domain. 4 residues coordinate [2Fe-2S] cluster: Cys211, His213, Cys230, and His233. A disulfide bond links Cys216 and Cys232.

It belongs to the Rieske iron-sulfur protein family. As to quaternary structure, component of the ubiquinol-cytochrome c oxidoreductase (cytochrome b-c1 complex, complex III, CIII), a multisubunit enzyme composed of 3 respiratory subunits cytochrome b, cytochrome c1 and Rieske protein, 2 core protein subunits, and several low-molecular weight protein subunits. The complex exists as an obligatory dimer and forms supercomplexes (SCs) in the inner mitochondrial membrane with cytochrome c oxidase (complex IV, CIV). Requires [2Fe-2S] cluster as cofactor. In terms of tissue distribution, high levels are seen in the flowers while a low level expression is seen in the roots, leaves and stems.

It is found in the mitochondrion inner membrane. The enzyme catalyses a quinol + 2 Fe(III)-[cytochrome c](out) = a quinone + 2 Fe(II)-[cytochrome c](out) + 2 H(+)(out). In terms of biological role, component of the ubiquinol-cytochrome c oxidoreductase, a multisubunit transmembrane complex that is part of the mitochondrial electron transport chain which drives oxidative phosphorylation. The respiratory chain contains 3 multisubunit complexes succinate dehydrogenase (complex II, CII), ubiquinol-cytochrome c oxidoreductase (cytochrome b-c1 complex, complex III, CIII) and cytochrome c oxidase (complex IV, CIV), that cooperate to transfer electrons derived from NADH and succinate to molecular oxygen, creating an electrochemical gradient over the inner membrane that drives transmembrane transport and the ATP synthase. The cytochrome b-c1 complex catalyzes electron transfer from ubiquinol to cytochrome c, linking this redox reaction to translocation of protons across the mitochondrial inner membrane, with protons being carried across the membrane as hydrogens on the quinol. In the process called Q cycle, 2 protons are consumed from the matrix, 4 protons are released into the intermembrane space and 2 electrons are passed to cytochrome c. The Rieske protein is a catalytic core subunit containing a [2Fe-2S] iron-sulfur cluster. It cycles between 2 conformational states during catalysis to transfer electrons from the quinol bound in the Q(0) site in cytochrome b to cytochrome c1. The chain is Cytochrome b-c1 complex subunit Rieske-5, mitochondrial from Nicotiana tabacum (Common tobacco).